The chain runs to 249 residues: uncharacterized protein (249 aa).

Positions 30–65 (KVDKLKKLEIKKLEDQKKLKEQEEKHRLTLIRLANA) form a coiled coil. A disordered region spans residues 66-97 (PPQTNSINNNNNNNNNIKTNRPPLIYGEDKDK).

This is an uncharacterized protein from Dictyostelium discoideum (Social amoeba).